Consider the following 360-residue polypeptide: Putative transport protein BU123 (360 aa).

The next 9 helical transmembrane spans lie at 18–38 (IFIV…ILGF), 39–59 (FWAS…QKIL), 66–86 (AVII…FFLV), 161–181 (GLFI…YWNG), 204–224 (LLLA…TALI), 230–250 (GIGL…IIFF), 251–271 (SCLI…WLYW), 280–300 (ILLI…PFFI), and 316–336 (IGGL…VLVI).

Belongs to the autoinducer-2 exporter (AI-2E) (TC 2.A.86) family.

The protein resides in the cell membrane. The polypeptide is Putative transport protein BU123 (Buchnera aphidicola subsp. Acyrthosiphon pisum (strain APS) (Acyrthosiphon pisum symbiotic bacterium)).